Here is a 272-residue protein sequence, read N- to C-terminus: Ras-related protein RSR1 (272 aa).

GTP is bound at residue 10–17; that stretch reads GAGGVGKS. The Effector region signature appears at 32–40; it reads YDPTIEDSY. GTP contacts are provided by residues 57–61 and 116–119; these read DTAGI and NKAD. Residues 177 to 272 are disordered; that stretch reads DARNQSQQFS…KKNASTCTIL (96 aa). Polar residues-rich tracts occupy residues 180–232 and 245–258; these read NQSQ…STPV and SGSSNRTGISATSQ. Cysteine 269 is modified (cysteine methyl ester). The S-geranylgeranyl cysteine moiety is linked to residue cysteine 269. The propeptide at 270–272 is removed in mature form; it reads TIL.

This sequence belongs to the small GTPase superfamily. Ras family.

It localises to the cell membrane. It carries out the reaction GTP + H2O = GDP + phosphate + H(+). Alternates between an inactive form bound to GDP and an active form bound to GTP. Activated by a guanine nucleotide-exchange factor (GEF) and inactivated by a GTPase-activating protein (GAP). Functionally, ras-related protein which binds GDP/GTP and possesses intrinsic GTPase activity. Involved in development of cell polarity during the cell division cycle, and essential for bud emergence. The polypeptide is Ras-related protein RSR1 (Saccharomyces cerevisiae (strain ATCC 204508 / S288c) (Baker's yeast)).